Consider the following 471-residue polypeptide: Alpha-galactosidase 5 (471 aa).

Positions 1-18 are cleaved as a signal peptide; it reads MFAFYFLTACTTLKGVFG. Cys42 and Cys74 are joined by a disulfide. Substrate contacts are provided by Asp72 and Asp73. N-linked (GlcNAc...) asparagine glycosylation is present at Asn105. A disulfide bridge connects residues Cys121 and Cys151. Lys147 contributes to the substrate binding site. Asp149 acts as the Nucleophile in catalysis. A glycan (N-linked (GlcNAc...) asparagine) is linked at Asn175. Arg205 is a substrate binding site. The active-site Proton donor is the Asp209. 2 disulfides stabilise this stretch: Cys221-Cys237 and Cys223-Cys230. A substrate-binding site is contributed by Gln251. 6 N-linked (GlcNAc...) asparagine glycosylation sites follow: Asn270, Asn370, Asn403, Asn422, Asn435, and Asn454.

Belongs to the glycosyl hydrolase 27 family. As to quaternary structure, homotetramer.

It is found in the secreted. It carries out the reaction Hydrolysis of terminal, non-reducing alpha-D-galactose residues in alpha-D-galactosides, including galactose oligosaccharides, galactomannans and galactolipids.. The protein is Alpha-galactosidase 5 (MEL5) of Saccharomyces cerevisiae (Baker's yeast).